We begin with the raw amino-acid sequence, 118 residues long: Large ribosomal subunit protein uL18 (118 aa).

The protein belongs to the universal ribosomal protein uL18 family. In terms of assembly, part of the 50S ribosomal subunit; part of the 5S rRNA/L5/L18/L25 subcomplex. Contacts the 5S and 23S rRNAs.

Its function is as follows. This is one of the proteins that bind and probably mediate the attachment of the 5S RNA into the large ribosomal subunit, where it forms part of the central protuberance. The protein is Large ribosomal subunit protein uL18 of Rickettsia typhi (strain ATCC VR-144 / Wilmington).